Consider the following 270-residue polypeptide: Formamidopyrimidine-DNA glycosylase (270 aa).

Proline 2 (schiff-base intermediate with DNA) is an active-site residue. The Proton donor role is filled by glutamate 3. Catalysis depends on lysine 57, which acts as the Proton donor; for beta-elimination activity. DNA-binding residues include histidine 90, arginine 109, and lysine 150. The FPG-type zinc finger occupies 235-269 (QIYGKKGCPCPKCGQKIESFTVGQRNSYVCLHCQK). The Proton donor; for delta-elimination activity role is filled by arginine 259.

The protein belongs to the FPG family. As to quaternary structure, monomer. Zn(2+) serves as cofactor.

It catalyses the reaction Hydrolysis of DNA containing ring-opened 7-methylguanine residues, releasing 2,6-diamino-4-hydroxy-5-(N-methyl)formamidopyrimidine.. The catalysed reaction is 2'-deoxyribonucleotide-(2'-deoxyribose 5'-phosphate)-2'-deoxyribonucleotide-DNA = a 3'-end 2'-deoxyribonucleotide-(2,3-dehydro-2,3-deoxyribose 5'-phosphate)-DNA + a 5'-end 5'-phospho-2'-deoxyribonucleoside-DNA + H(+). Functionally, involved in base excision repair of DNA damaged by oxidation or by mutagenic agents. Acts as a DNA glycosylase that recognizes and removes damaged bases. Has a preference for oxidized purines, such as 7,8-dihydro-8-oxoguanine (8-oxoG). Has AP (apurinic/apyrimidinic) lyase activity and introduces nicks in the DNA strand. Cleaves the DNA backbone by beta-delta elimination to generate a single-strand break at the site of the removed base with both 3'- and 5'-phosphates. This chain is Formamidopyrimidine-DNA glycosylase, found in Actinobacillus succinogenes (strain ATCC 55618 / DSM 22257 / CCUG 43843 / 130Z).